We begin with the raw amino-acid sequence, 444 residues long: Ribulose bisphosphate carboxylase large chain (444 aa).

K5 bears the N6,N6,N6-trimethyllysine mark. Positions 114 and 164 each coordinate substrate. The Proton acceptor role is filled by K166. K168 provides a ligand contact to substrate. Mg(2+)-binding residues include K192, D194, and E195. Residue K192 is modified to N6-carboxylysine. The active-site Proton acceptor is H285. Positions 286, 318, and 370 each coordinate substrate.

Belongs to the RuBisCO large chain family. Type I subfamily. As to quaternary structure, heterohexadecamer of 8 large chains and 8 small chains; disulfide-linked. The disulfide link is formed within the large subunit homodimers. The cofactor is Mg(2+). Post-translationally, the disulfide bond which can form in the large chain dimeric partners within the hexadecamer appears to be associated with oxidative stress and protein turnover.

The protein localises to the plastid. It is found in the chloroplast. It catalyses the reaction 2 (2R)-3-phosphoglycerate + 2 H(+) = D-ribulose 1,5-bisphosphate + CO2 + H2O. It carries out the reaction D-ribulose 1,5-bisphosphate + O2 = 2-phosphoglycolate + (2R)-3-phosphoglycerate + 2 H(+). RuBisCO catalyzes two reactions: the carboxylation of D-ribulose 1,5-bisphosphate, the primary event in carbon dioxide fixation, as well as the oxidative fragmentation of the pentose substrate in the photorespiration process. Both reactions occur simultaneously and in competition at the same active site. The polypeptide is Ribulose bisphosphate carboxylase large chain (Ginkgo biloba (Ginkgo)).